A 276-amino-acid chain; its full sequence is Ribosomal RNA small subunit methyltransferase A (276 aa).

S-adenosyl-L-methionine contacts are provided by asparagine 27, leucine 29, glycine 54, glutamate 75, aspartate 101, and asparagine 122.

It belongs to the class I-like SAM-binding methyltransferase superfamily. rRNA adenine N(6)-methyltransferase family. RsmA subfamily.

It is found in the cytoplasm. The catalysed reaction is adenosine(1518)/adenosine(1519) in 16S rRNA + 4 S-adenosyl-L-methionine = N(6)-dimethyladenosine(1518)/N(6)-dimethyladenosine(1519) in 16S rRNA + 4 S-adenosyl-L-homocysteine + 4 H(+). In terms of biological role, specifically dimethylates two adjacent adenosines (A1518 and A1519) in the loop of a conserved hairpin near the 3'-end of 16S rRNA in the 30S particle. May play a critical role in biogenesis of 30S subunits. This is Ribosomal RNA small subunit methyltransferase A from Brucella abortus (strain S19).